The primary structure comprises 205 residues: MSVVFVAASKLPTPFGEFTMHGFLDEESGKEHVALSMGDIADGAPVLGRLHSECLTGDALFSLRCDCGFQLEGALAAIAEEGRGVLLYLRQEGRGIGLLNKIRAYELQDGGADTVEANLQLGFGADQRDYAMCQPMLAHLGVSSLRLMTNNPRKVKALESYAITVAERVPLQKGLNKHNRRYLATKAGKLGHMLGSLHQGEAETT.

A GTP-binding site is contributed by Arg-49 to Glu-53. Zn(2+)-binding residues include Cys-54, Cys-65, and Cys-67. GTP is bound by residues Gln-70, Glu-92–Arg-94, and Thr-114. Asp-126 functions as the Proton acceptor in the catalytic mechanism. Arg-128 (nucleophile) is an active-site residue. The GTP site is built by Thr-149 and Lys-154.

Belongs to the GTP cyclohydrolase II family. The cofactor is Zn(2+).

It carries out the reaction GTP + 4 H2O = 2,5-diamino-6-hydroxy-4-(5-phosphoribosylamino)-pyrimidine + formate + 2 phosphate + 3 H(+). It functions in the pathway cofactor biosynthesis; riboflavin biosynthesis; 5-amino-6-(D-ribitylamino)uracil from GTP: step 1/4. Functionally, catalyzes the conversion of GTP to 2,5-diamino-6-ribosylamino-4(3H)-pyrimidinone 5'-phosphate (DARP), formate and pyrophosphate. In Pseudomonas aeruginosa (strain LESB58), this protein is GTP cyclohydrolase-2.